The chain runs to 493 residues: MKATKETLSPTRVKLTVEVPFDELKPSLDATYRKLARQVRVSGFRPGKVPPRILDQRLGRGVILDEAVQEALPQLYSEAVQAEEVDVLSRPEVDITEFADGGQLVFTAEVDVRPEVALPEFADLSVTVDAVEVTDEQVEEQLGALRDRFAQLQPVERAVQTGDFVSLDLSAQADGKPIEGAEATGLSYEVGSGNLIEGLDEAIVGAADGESRTFTTELLAGDQAGQQAEVTATVRGVKEKELPALDDDFATTASEFDTLDDLRGDVRSRLEQSRRTEQVGQAREKLLESLLERVDVPVPDSLLAGEIEAREHRLSHELENIGTDRATYLETLGQTAEEFDAEVRETAGKAIRSQFILDAVIDAESIGIDQGELMEQVIYRAQRSGLQPDVYAQQLAQGEGLQALMADVLRTKALFLLLENAKVVDGEGNPVELALPARPAPDADEDDDHAGHDHEGHDHADHAGHDHAGDDAAAEPAEAPAATAAVDSGDRDI.

One can recognise a PPIase FKBP-type domain in the interval 162-243; the sequence is GDFVSLDLSA…VRGVKEKELP (82 aa). Residues 432–493 are disordered; it reads ELALPARPAP…AAVDSGDRDI (62 aa). The span at 449-470 shows a compositional bias: basic and acidic residues; it reads HAGHDHEGHDHADHAGHDHAGD. Low complexity predominate over residues 474-485; sequence AEPAEAPAATAA.

This sequence belongs to the FKBP-type PPIase family. Tig subfamily.

The protein resides in the cytoplasm. It catalyses the reaction [protein]-peptidylproline (omega=180) = [protein]-peptidylproline (omega=0). Involved in protein export. Acts as a chaperone by maintaining the newly synthesized protein in an open conformation. Functions as a peptidyl-prolyl cis-trans isomerase. This Frankia alni (strain DSM 45986 / CECT 9034 / ACN14a) protein is Trigger factor.